Reading from the N-terminus, the 380-residue chain is Aprataxin (380 aa).

The region spanning 36–85 (PVIIGRTPELGITDKLCSRSQLELTSNCYKRYVLVKRLGANTSQINGIDI) is the FHA-like domain. The interval 176 to 207 (VYAFDSPSPMSSRCEKKAESNKRAPTHKHWSQ) is disordered. Over residues 188-197 (RCEKKAESNK) the composition is skewed to basic and acidic residues. The HIT domain occupies 206-312 (SQGLKASMED…ISQDFQSSSF (107 aa)). Interaction with DNA substrate regions lie at residues 231 to 235 (DKYPK) and 294 to 295 (SM). The Histidine triad motif signature appears at 297–301 (QMHMH). Residue His-299 is the Tele-AMP-histidine intermediate of the active site. The C2H2-type; atypical zinc-finger motif lies at 356–378 (LKCHRCKKPQKNIPTLKKHIDSC).

The protein resides in the nucleus. It is found in the nucleoplasm. The protein localises to the nucleolus. The catalysed reaction is a 5'-end adenosine-5'-diphospho-5'-2'-deoxyribonucleoside-DNA + H2O = a 5'-end 5'-phospho-2'-deoxyribonucleoside-DNA + AMP + 2 H(+). The enzyme catalyses a 5'-end adenosine-5'-diphospho-5'-ribonucleoside-2'-deoxyribonucleotide-DNA + H2O = a 5'-end 5'-phospho-ribonucleoside-2'-deoxyribonucleotide-DNA + AMP + 2 H(+). It catalyses the reaction a 3'-end 2'-deoxyribonucleotide-3'-diphospho-5'-guanosine-DNA + H2O = a 3'-end 2'-deoxyribonucleotide 3'-phosphate-DNA + GMP + 2 H(+). In terms of biological role, DNA-binding protein involved in single-strand DNA break repair, double-strand DNA break repair and base excision repair. Resolves abortive DNA ligation intermediates formed either at base excision sites, or when DNA ligases attempt to repair non-ligatable breaks induced by reactive oxygen species. Catalyzes the release of adenylate groups covalently linked to 5'-phosphate termini, resulting in the production of 5'-phosphate termini that can be efficiently rejoined. Also able to hydrolyze adenosine 5'-monophosphoramidate (AMP-NH(2)) and diadenosine tetraphosphate (AppppA), but with lower catalytic activity. Likewise, catalyzes the release of 3'-linked guanosine (DNAppG) and inosine (DNAppI) from DNA, but has higher specific activity with 5'-linked adenosine (AppDNA). In Ciona intestinalis (Transparent sea squirt), this protein is Aprataxin (APTX).